Reading from the N-terminus, the 184-residue chain is Glutathione-regulated potassium-efflux system ancillary protein KefG (184 aa).

It belongs to the NAD(P)H dehydrogenase (quinone) family. KefG subfamily. In terms of assembly, interacts with KefB.

Its subcellular location is the cell inner membrane. The catalysed reaction is a quinone + NADH + H(+) = a quinol + NAD(+). It carries out the reaction a quinone + NADPH + H(+) = a quinol + NADP(+). Its function is as follows. Regulatory subunit of a potassium efflux system that confers protection against electrophiles. Required for full activity of KefB. The polypeptide is Glutathione-regulated potassium-efflux system ancillary protein KefG (Escherichia coli O8 (strain IAI1)).